A 921-amino-acid polypeptide reads, in one-letter code: Isoleucine--tRNA ligase (921 aa).

The 'HIGH' region motif lies at 57–67 (PYANGDIHMGH). Position 552 (glutamate 552) interacts with L-isoleucyl-5'-AMP. A 'KMSKS' region motif is present at residues 593–597 (KMSKS). Residue lysine 596 coordinates ATP. Cysteine 888, cysteine 891, cysteine 908, and cysteine 911 together coordinate Zn(2+).

It belongs to the class-I aminoacyl-tRNA synthetase family. IleS type 1 subfamily. Monomer. Zn(2+) serves as cofactor.

It is found in the cytoplasm. It carries out the reaction tRNA(Ile) + L-isoleucine + ATP = L-isoleucyl-tRNA(Ile) + AMP + diphosphate. In terms of biological role, catalyzes the attachment of isoleucine to tRNA(Ile). As IleRS can inadvertently accommodate and process structurally similar amino acids such as valine, to avoid such errors it has two additional distinct tRNA(Ile)-dependent editing activities. One activity is designated as 'pretransfer' editing and involves the hydrolysis of activated Val-AMP. The other activity is designated 'posttransfer' editing and involves deacylation of mischarged Val-tRNA(Ile). The polypeptide is Isoleucine--tRNA ligase (Bacillus cereus (strain 03BB102)).